The sequence spans 277 residues: Probable cytochrome c oxidase subunit 3 (277 aa).

The next 6 helical transmembrane spans lie at 20-40, 45-65, 88-108, 173-193, 211-231, and 255-275; these read PWPI…VSFM, FNHY…YSWW, IGMA…FASF, CVTA…MQAY, FYLA…FLIV, and AWYW…VYIF.

This sequence belongs to the cytochrome c oxidase subunit 3 family.

Its subcellular location is the cell membrane. The catalysed reaction is 4 Fe(II)-[cytochrome c] + O2 + 8 H(+)(in) = 4 Fe(III)-[cytochrome c] + 2 H2O + 4 H(+)(out). The sequence is that of Probable cytochrome c oxidase subunit 3 (ctaE) from Rickettsia bellii (strain RML369-C).